Reading from the N-terminus, the 469-residue chain is MGTVHARSLEPLPSSGTDFGALGEEAEFVEVEPEAKQEILENKDVVVQHVHFDGLGRTKDDIIICEIGEVFKAKNLIEVMRRSHEAREKLLRLGIFRQVDVLIDTCHGEDALPNGLDVTFEVTELRRLTGSYNTMVGNNEGSMVLGLKLPNLLGRAEKVTFQFSYGTKETSYGLSFFKPQPGNFERNFSVNLYKVTGQFPWSSLRETDRGVSAEYSFPLWKTSHTVKWEGVWRELGCLSRTASFAVRKESGHSLKSSLSHAMVIDSRNSSILPRRGALFKVNQELAGYTGGDVSFIKEDFELQLNKPLALDSVFSTSLWGGMLVPIGDKPSSIADRFYLGGPTSVRGFSMHSIGPQSEGDYLGGEAYWAGGLHLYTPLPFRPGQGGFGELFRTHFFLNAGNLCNLNYGEGPKAHIRKLAECIRWSYGAGVVLRLGNIARLELNYCIPMGVQGGDRICDGVQFGAGIRFL.

The POTRA domain maps to 45–125 (VVVQHVHFDG…LDVTFEVTEL (81 aa)). Residue Lys255 is modified to N6-methyllysine.

This sequence belongs to the SAM50/omp85 family. As to quaternary structure, associates with the mitochondrial contact site and cristae organizing system (MICOS) complex, composed of at least MICOS10/MIC10, CHCHD3/MIC19, CHCHD6/MIC25, APOOL/MIC27, IMMT/MIC60, APOO/MIC23/MIC26 and QIL1/MIC13. This complex was also known under the names MINOS or MitOS complex. The MICOS complex associates with mitochondrial outer membrane proteins SAMM50, MTX1 and MTX2 (together described as components of the mitochondrial outer membrane sorting assembly machinery (SAM) complex) and DNAJC11, mitochondrial inner membrane protein TMEM11 and with HSPA9. The MICOS and SAM complexes together with DNAJC11 are part of a large protein complex spanning both membranes termed the mitochondrial intermembrane space bridging (MIB) complex. Interacts with IMMT/MIC60. Interacts with CHCHD3/MIC19. Interacts with ARMC1. In terms of assembly, (Microbial infection) Interacts with parasite T.gondii RH strain MAF1b1; the interaction is probably indirect and results in the disruption of the MIB complex and the formation of SPOTs (structures positive for outer mitochondrial membrane (OMM)), a cellular response to OMM stress, which leads to the constitutive shedding of OMM vesicles.

The protein resides in the mitochondrion outer membrane. It is found in the cytoplasm. It localises to the mitochondrion. In terms of biological role, plays a crucial role in the maintenance of the structure of mitochondrial cristae and the proper assembly of the mitochondrial respiratory chain complexes. Required for the assembly of TOMM40 into the TOM complex. This is Sorting and assembly machinery component 50 homolog (Samm50) from Mus musculus (Mouse).